A 456-amino-acid polypeptide reads, in one-letter code: Cysteine--tRNA ligase (456 aa).

Cys-30 is a Zn(2+) binding site. A 'HIGH' region motif is present at residues 32 to 42; the sequence is MTVYDFCHIGH. The Zn(2+) site is built by Cys-211, His-236, and Glu-240. The short motif at 268–272 is the 'KMSKS' region element; sequence KMSKS. Residue Lys-271 coordinates ATP.

The protein belongs to the class-I aminoacyl-tRNA synthetase family. Monomer. Zn(2+) is required as a cofactor.

It localises to the cytoplasm. The catalysed reaction is tRNA(Cys) + L-cysteine + ATP = L-cysteinyl-tRNA(Cys) + AMP + diphosphate. The polypeptide is Cysteine--tRNA ligase (Dichelobacter nodosus (strain VCS1703A)).